We begin with the raw amino-acid sequence, 158 residues long: MTLKTIEGTFTAAKGRYALVVGRFNSFVVESLVQGAIDTLVRHGVEQSELTIIRVPGAFEIPLVAQKVAQRGEFDAIIALGAVIRGGTPHFEYVAGECTKGLAQVSLQFGVPVAFGVLTVDSIEQAIERSGTKAGNKGAEAALSALEMVSLMAALEAK.

5-amino-6-(D-ribitylamino)uracil is bound by residues Phe24, 58–60 (AFE), and 82–84 (AVI). 87-88 (GT) is a (2S)-2-hydroxy-3-oxobutyl phosphate binding site. His90 serves as the catalytic Proton donor. Residue Phe115 participates in 5-amino-6-(D-ribitylamino)uracil binding. Residue Arg129 participates in (2S)-2-hydroxy-3-oxobutyl phosphate binding.

It belongs to the DMRL synthase family. In terms of assembly, forms an icosahedral capsid composed of 60 subunits, arranged as a dodecamer of pentamers.

The enzyme catalyses (2S)-2-hydroxy-3-oxobutyl phosphate + 5-amino-6-(D-ribitylamino)uracil = 6,7-dimethyl-8-(1-D-ribityl)lumazine + phosphate + 2 H2O + H(+). It functions in the pathway cofactor biosynthesis; riboflavin biosynthesis; riboflavin from 2-hydroxy-3-oxobutyl phosphate and 5-amino-6-(D-ribitylamino)uracil: step 1/2. Functionally, catalyzes the formation of 6,7-dimethyl-8-ribityllumazine by condensation of 5-amino-6-(D-ribitylamino)uracil with 3,4-dihydroxy-2-butanone 4-phosphate. This is the penultimate step in the biosynthesis of riboflavin. The protein is 6,7-dimethyl-8-ribityllumazine synthase of Azotobacter vinelandii (strain DJ / ATCC BAA-1303).